A 386-amino-acid chain; its full sequence is DNA replication and repair protein RecF (386 aa).

ATP is bound at residue 30–37 (GANAQGKT).

The protein belongs to the RecF family.

It localises to the cytoplasm. Functionally, the RecF protein is involved in DNA metabolism; it is required for DNA replication and normal SOS inducibility. RecF binds preferentially to single-stranded, linear DNA. It also seems to bind ATP. The protein is DNA replication and repair protein RecF of Natranaerobius thermophilus (strain ATCC BAA-1301 / DSM 18059 / JW/NM-WN-LF).